A 412-amino-acid chain; its full sequence is NFATC2-interacting protein (412 aa).

Residues 1-38 are disordered; sequence MAEPLRGRGPRSRGGRGARRARGARGRCPRARQSPARL. Residues 8 to 30 show a composition bias toward basic residues; sequence RGPRSRGGRGARRARGARGRCPR. Phosphoserine is present on residues serine 49, serine 51, serine 79, serine 81, and serine 83. Residues 58–115 are disordered; the sequence is VADPVEVPVARLPAPAKPEQDSDSDSEGAAEGPAGAPRTLVRRRRRRLLDPGEAPVVP. A compositionally biased stretch (low complexity) spans 86–96; sequence AAEGPAGAPRT. A Phosphoserine modification is found at serine 118. Lysine 120 participates in a covalent cross-link: Glycyl lysine isopeptide (Lys-Gly) (interchain with G-Cter in SUMO2). The disordered stretch occupies residues 136 to 206; the sequence is KLCPSEPEDE…SSRNKSRKHT (71 aa). Residues 168-227 adopt a coiled-coil conformation; the sequence is RKKLRKKCEKEEKKMEEFPDQDISPLPQPSSRNKSRKHTEALQKLREVNKRLQDLRSCLS. The span at 175–184 shows a compositional bias: basic and acidic residues; sequence CEKEEKKMEE. Residues serine 191, serine 197, and serine 307 each carry the phosphoserine modification. Phosphothreonine occurs at positions 309 and 311. In terms of domain architecture, Ubiquitin-like spans 341–412; sequence LRLRVQGKEK…ESGDLIEVWG (72 aa). Phosphoserine occurs at positions 362 and 383.

Interacts with NFATC2, TRAF1, TRAF2 and PRMT1. Interacts with UBE2I/UBC9. Post-translationally, methylation at the N-terminus by PRMT1 modulates interaction with the NFAT complex and results in augmented cytokine production. Highest level detected in spleen, thymus and testis.

The protein resides in the nucleus. It is found in the cytoplasm. In T-helper 2 (Th2) cells, regulates the magnitude of NFAT-driven transcription of a specific subset of cytokine genes, including IL3, IL4, IL5 and IL13, but not IL2. Recruits PRMT1 to the IL4 promoter; this leads to enhancement of histone H4 'Arg-3'-methylation and facilitates subsequent histone acetylation at the IL4 locus, thus promotes robust cytokine expression. Down-regulates formation of poly-SUMO chains by UBE2I/UBC9. This Mus musculus (Mouse) protein is NFATC2-interacting protein (Nfatc2ip).